A 158-amino-acid chain; its full sequence is Aspartate carbamoyltransferase regulatory chain (158 aa).

Zn(2+) is bound by residues cysteine 111, cysteine 116, cysteine 140, and cysteine 143.

Belongs to the PyrI family. In terms of assembly, contains catalytic and regulatory chains. Zn(2+) is required as a cofactor.

Its function is as follows. Involved in allosteric regulation of aspartate carbamoyltransferase. This Metallosphaera sedula (strain ATCC 51363 / DSM 5348 / JCM 9185 / NBRC 15509 / TH2) protein is Aspartate carbamoyltransferase regulatory chain.